We begin with the raw amino-acid sequence, 98 residues long: NADH-ubiquinone oxidoreductase chain 4L (98 aa).

Helical transmembrane passes span 1–21 and 48–68; these read MTLIHFSFCSAFILGLTGLAL and PLHLTIYLSSMMLYIMLPFAA.

The protein belongs to the complex I subunit 4L family. As to quaternary structure, core subunit of respiratory chain NADH dehydrogenase (Complex I) which is composed of 45 different subunits.

The protein localises to the mitochondrion inner membrane. It catalyses the reaction a ubiquinone + NADH + 5 H(+)(in) = a ubiquinol + NAD(+) + 4 H(+)(out). In terms of biological role, core subunit of the mitochondrial membrane respiratory chain NADH dehydrogenase (Complex I) which catalyzes electron transfer from NADH through the respiratory chain, using ubiquinone as an electron acceptor. Part of the enzyme membrane arm which is embedded in the lipid bilayer and involved in proton translocation. This chain is NADH-ubiquinone oxidoreductase chain 4L (mt-nd4l), found in Xenopus laevis (African clawed frog).